Reading from the N-terminus, the 430-residue chain is Enolase (430 aa).

Residue Gln-164 coordinates (2R)-2-phosphoglycerate. The active-site Proton donor is the Glu-206. Mg(2+) contacts are provided by Asp-243, Glu-288, and Asp-315. (2R)-2-phosphoglycerate contacts are provided by Lys-340, Arg-369, Ser-370, and Lys-391. Residue Lys-340 is the Proton acceptor of the active site.

It belongs to the enolase family. The cofactor is Mg(2+).

The protein localises to the cytoplasm. The protein resides in the secreted. Its subcellular location is the cell surface. It catalyses the reaction (2R)-2-phosphoglycerate = phosphoenolpyruvate + H2O. Its pathway is carbohydrate degradation; glycolysis; pyruvate from D-glyceraldehyde 3-phosphate: step 4/5. Catalyzes the reversible conversion of 2-phosphoglycerate (2-PG) into phosphoenolpyruvate (PEP). It is essential for the degradation of carbohydrates via glycolysis. The protein is Enolase of Lysinibacillus sphaericus (strain C3-41).